We begin with the raw amino-acid sequence, 72 residues long: Translation initiation factor IF-1 (72 aa).

An S1-like domain is found at 1-72 (MAKEDAIELQ…SKGRIVFRAR (72 aa)).

This sequence belongs to the IF-1 family. Component of the 30S ribosomal translation pre-initiation complex which assembles on the 30S ribosome in the order IF-2 and IF-3, IF-1 and N-formylmethionyl-tRNA(fMet); mRNA recruitment can occur at any time during PIC assembly.

It is found in the cytoplasm. Functionally, one of the essential components for the initiation of protein synthesis. Stabilizes the binding of IF-2 and IF-3 on the 30S subunit to which N-formylmethionyl-tRNA(fMet) subsequently binds. Helps modulate mRNA selection, yielding the 30S pre-initiation complex (PIC). Upon addition of the 50S ribosomal subunit IF-1, IF-2 and IF-3 are released leaving the mature 70S translation initiation complex. The polypeptide is Translation initiation factor IF-1 (Aliivibrio fischeri (strain ATCC 700601 / ES114) (Vibrio fischeri)).